The chain runs to 462 residues: Phospho-2-dehydro-3-deoxyheptonate aldolase AroG (462 aa).

Cysteine 87 provides a ligand contact to Mn(2+). Phosphoenolpyruvate contacts are provided by residues arginine 126, 283–284 (ER), lysine 306, and arginine 337. Residues histidine 369, glutamate 411, and aspartate 441 each coordinate Mn(2+).

As to quaternary structure, homodimer. Interacts with Rv0948c. The cofactor is Mn(2+). Co(2+) serves as cofactor. Cd(2+) is required as a cofactor.

The enzyme catalyses D-erythrose 4-phosphate + phosphoenolpyruvate + H2O = 7-phospho-2-dehydro-3-deoxy-D-arabino-heptonate + phosphate. It participates in metabolic intermediate biosynthesis; chorismate biosynthesis; chorismate from D-erythrose 4-phosphate and phosphoenolpyruvate: step 1/7. With respect to regulation, feedback inhibited by tryptophan, tyrosine, phenylalanine and chorismate. In terms of biological role, catalyzes an aldol-like condensation reaction between phosphoenolpyruvate (PEP) and D-erythrose 4-phosphate (E4P) to generate 3-deoxy-D-arabino-heptulosonate 7-phosphate (DAH7P) and inorganic phosphate. The polypeptide is Phospho-2-dehydro-3-deoxyheptonate aldolase AroG (aroG) (Mycobacterium tuberculosis (strain ATCC 25618 / H37Rv)).